The primary structure comprises 314 residues: Deoxymugineic acid synthase 1-B (314 aa).

A disordered region spans residues 1–22; that stretch reads MGAGDKTAAGMPRIGMGTAVQG. An NADP(+)-binding site is contributed by D44. Residue Y49 is the Proton donor of the active site. H112 is a substrate binding site. NADP(+) is bound by residues 158–159, Q180, 258–266, and 273–281; these read AN, FDEARMREN, and ELTEEERRR.

This sequence belongs to the aldo/keto reductase family. In terms of tissue distribution, mostly expressed in root tissues, observed in mesocotyl and embryonic roots, seedling roots, crown and seedling leafes, mature bracts, anthers, pistil, caryopsis and embryos.

It catalyses the reaction 2'-deoxymugineate + NAD(+) = 3''-deamino-3''-oxonicotianamine + NADH + H(+). It carries out the reaction 2'-deoxymugineate + NADP(+) = 3''-deamino-3''-oxonicotianamine + NADPH + H(+). It functions in the pathway siderophore biosynthesis. In terms of biological role, catalyzes the reduction of a 3''-keto intermediate during the biosynthesis of 2'-deoxymugineic acid (DMA) from L-Met. Involved in the formation of phytosiderophores (MAs) belonging to the mugineic acid family and required to acquire iron. This Triticum aestivum (Wheat) protein is Deoxymugineic acid synthase 1-B.